The following is a 582-amino-acid chain: 2-succinyl-5-enolpyruvyl-6-hydroxy-3-cyclohexene-1-carboxylate synthase (582 aa).

The protein belongs to the TPP enzyme family. MenD subfamily. In terms of assembly, homodimer. Mg(2+) serves as cofactor. Mn(2+) is required as a cofactor. Requires thiamine diphosphate as cofactor.

It catalyses the reaction isochorismate + 2-oxoglutarate + H(+) = 5-enolpyruvoyl-6-hydroxy-2-succinyl-cyclohex-3-ene-1-carboxylate + CO2. It functions in the pathway quinol/quinone metabolism; 1,4-dihydroxy-2-naphthoate biosynthesis; 1,4-dihydroxy-2-naphthoate from chorismate: step 2/7. It participates in quinol/quinone metabolism; menaquinone biosynthesis. In terms of biological role, catalyzes the thiamine diphosphate-dependent decarboxylation of 2-oxoglutarate and the subsequent addition of the resulting succinic semialdehyde-thiamine pyrophosphate anion to isochorismate to yield 2-succinyl-5-enolpyruvyl-6-hydroxy-3-cyclohexene-1-carboxylate (SEPHCHC). The protein is 2-succinyl-5-enolpyruvyl-6-hydroxy-3-cyclohexene-1-carboxylate synthase of Chlorobaculum tepidum (strain ATCC 49652 / DSM 12025 / NBRC 103806 / TLS) (Chlorobium tepidum).